Reading from the N-terminus, the 76-residue chain is UPF0248 protein PAE2518 (76 aa).

The protein belongs to the UPF0248 family.

In Pyrobaculum aerophilum (strain ATCC 51768 / DSM 7523 / JCM 9630 / CIP 104966 / NBRC 100827 / IM2), this protein is UPF0248 protein PAE2518.